The sequence spans 699 residues: D-(-)-3-hydroxybutyrate oligomer hydrolase (699 aa).

An N-terminal signal peptide occupies residues 1–19; that stretch reads MNPSLCIAVAFACPLSALA. Ser-303 functions as the Charge relay system in the catalytic mechanism.

Belongs to the D-(-)-3-hydroxybutyrate oligomer hydrolase family.

It is found in the secreted. The catalysed reaction is (3R)-hydroxybutanoate dimer + H2O = 2 (R)-3-hydroxybutanoate + H(+). It participates in lipid metabolism; butanoate metabolism. Participates in the degradation of poly-3-hydroxybutyrate (PHB). It works downstream of poly(3-hydroxybutyrate) depolymerase, hydrolyzing D(-)-3-hydroxybutyrate oligomers of various length (3HB-oligomers) into 3HB-monomers. The sequence is that of D-(-)-3-hydroxybutyrate oligomer hydrolase from Azoarcus sp. (strain BH72).